Consider the following 354-residue polypeptide: UDP-N-acetylglucosamine--N-acetylmuramyl-(pentapeptide) pyrophosphoryl-undecaprenol N-acetylglucosamine transferase (354 aa).

Residues 13-15 (SGG), N125, S189, I242, 261-266 (ALTVSE), and Q286 contribute to the UDP-N-acetyl-alpha-D-glucosamine site.

It belongs to the glycosyltransferase 28 family. MurG subfamily.

The protein localises to the cell inner membrane. The enzyme catalyses di-trans,octa-cis-undecaprenyl diphospho-N-acetyl-alpha-D-muramoyl-L-alanyl-D-glutamyl-meso-2,6-diaminopimeloyl-D-alanyl-D-alanine + UDP-N-acetyl-alpha-D-glucosamine = di-trans,octa-cis-undecaprenyl diphospho-[N-acetyl-alpha-D-glucosaminyl-(1-&gt;4)]-N-acetyl-alpha-D-muramoyl-L-alanyl-D-glutamyl-meso-2,6-diaminopimeloyl-D-alanyl-D-alanine + UDP + H(+). The protein operates within cell wall biogenesis; peptidoglycan biosynthesis. Its function is as follows. Cell wall formation. Catalyzes the transfer of a GlcNAc subunit on undecaprenyl-pyrophosphoryl-MurNAc-pentapeptide (lipid intermediate I) to form undecaprenyl-pyrophosphoryl-MurNAc-(pentapeptide)GlcNAc (lipid intermediate II). This chain is UDP-N-acetylglucosamine--N-acetylmuramyl-(pentapeptide) pyrophosphoryl-undecaprenol N-acetylglucosamine transferase, found in Buchnera aphidicola subsp. Acyrthosiphon pisum (strain APS) (Acyrthosiphon pisum symbiotic bacterium).